A 199-amino-acid chain; its full sequence is Glycerol-3-phosphate acyltransferase (199 aa).

5 helical membrane passes run 4–24, 56–76, 80–100, 115–135, and 154–176; these read FALF…AILI, LAVL…GYYL, QFEL…PIFF, IAPI…FVFL, and YVWW…LIYR.

It belongs to the PlsY family. As to quaternary structure, probably interacts with PlsX.

The protein localises to the cell inner membrane. The catalysed reaction is an acyl phosphate + sn-glycerol 3-phosphate = a 1-acyl-sn-glycero-3-phosphate + phosphate. Its pathway is lipid metabolism; phospholipid metabolism. Its function is as follows. Catalyzes the transfer of an acyl group from acyl-phosphate (acyl-PO(4)) to glycerol-3-phosphate (G3P) to form lysophosphatidic acid (LPA). This enzyme utilizes acyl-phosphate as fatty acyl donor, but not acyl-CoA or acyl-ACP. This is Glycerol-3-phosphate acyltransferase from Haemophilus influenzae (strain PittEE).